A 327-amino-acid chain; its full sequence is tRNA uridine(34) hydroxylase (327 aa).

The region spanning 130–224 (LDEDTVVLDT…YGKDPEVQGE (95 aa)) is the Rhodanese domain. The Cysteine persulfide intermediate role is filled by Cys-184.

This sequence belongs to the TrhO family.

The catalysed reaction is uridine(34) in tRNA + AH2 + O2 = 5-hydroxyuridine(34) in tRNA + A + H2O. Its function is as follows. Catalyzes oxygen-dependent 5-hydroxyuridine (ho5U) modification at position 34 in tRNAs. The chain is tRNA uridine(34) hydroxylase from Streptococcus thermophilus (strain ATCC BAA-250 / LMG 18311).